A 949-amino-acid polypeptide reads, in one-letter code: Valine--tRNA ligase (949 aa).

Positions 45-55 (PNVTGVLHMGH) match the 'HIGH' region motif. A 'KMSKS' region motif is present at residues 561–565 (KMSKS). K564 lines the ATP pocket. Residues 882–949 (EELLKQEKTR…EIKEKLMTLP (68 aa)) are a coiled coil.

Belongs to the class-I aminoacyl-tRNA synthetase family. ValS type 1 subfamily. As to quaternary structure, monomer.

It localises to the cytoplasm. The enzyme catalyses tRNA(Val) + L-valine + ATP = L-valyl-tRNA(Val) + AMP + diphosphate. Its function is as follows. Catalyzes the attachment of valine to tRNA(Val). As ValRS can inadvertently accommodate and process structurally similar amino acids such as threonine, to avoid such errors, it has a 'posttransfer' editing activity that hydrolyzes mischarged Thr-tRNA(Val) in a tRNA-dependent manner. The chain is Valine--tRNA ligase from Protochlamydia amoebophila (strain UWE25).